The chain runs to 389 residues: Chalcone synthase (389 aa).

The active site involves cysteine 164.

This sequence belongs to the thiolase-like superfamily. Chalcone/stilbene synthases family.

The enzyme catalyses (E)-4-coumaroyl-CoA + 3 malonyl-CoA + 3 H(+) = 2',4,4',6'-tetrahydroxychalcone + 3 CO2 + 4 CoA. The protein operates within secondary metabolite biosynthesis; flavonoid biosynthesis. Functionally, the primary product of this enzyme is 4,2',4',6'-tetrahydroxychalcone (also termed naringenin-chalcone or chalcone) which can under specific conditions spontaneously isomerize into naringenin. This is Chalcone synthase (CHS) from Pueraria montana var. lobata (Kudzu vine).